We begin with the raw amino-acid sequence, 193 residues long: Putative histone H2B type 2-C (193 aa).

A compositionally biased stretch (low complexity) spans 1–12 (MPEPAKFAPAPK). The interval 1–33 (MPEPAKFAPAPKKGSKKAVTKAQKKDGKKRKRS) is disordered. Pro2 bears the N-acetylproline mark. Lys6 bears the N6-(2-hydroxyisobutyryl)lysine; alternate mark. Residues Lys6 and Lys12 each carry the N6-(beta-hydroxybutyryl)lysine; alternate modification. 3 positions are modified to N6-acetyllysine; alternate: Lys6, Lys12, and Lys13. Lys6 bears the N6-butyryllysine; alternate mark. Residues Lys6, Lys12, and Lys13 each carry the N6-crotonyllysine; alternate modification. N6-lactoyllysine; alternate occurs at positions 6 and 12. Lys6 participates in a covalent cross-link: Glycyl lysine isopeptide (Lys-Gly) (interchain with G-Cter in SUMO2); alternate. The residue at position 13 (Lys13) is an N6-(2-hydroxyisobutyryl)lysine; alternate. Ser15 is modified (phosphoserine; by STK4/MST1). 4 positions are modified to N6-acetyllysine; alternate: Lys16, Lys17, Lys21, and Lys24. N6-crotonyllysine; alternate occurs at positions 16, 17, 21, and 24. Lys16, Lys17, Lys21, and Lys24 each carry N6-lactoyllysine; alternate. N6-(beta-hydroxybutyryl)lysine; alternate is present on residues Lys17 and Lys21. Lys17 bears the N6-glutaryllysine; alternate mark. N6-(2-hydroxyisobutyryl)lysine; alternate occurs at positions 21 and 24. At Lys21 the chain carries N6-butyryllysine; alternate. Lys21 participates in a covalent cross-link: Glycyl lysine isopeptide (Lys-Gly) (interchain with G-Cter in SUMO2); alternate. Lys25 carries the post-translational modification N6-(2-hydroxyisobutyryl)lysine. Lys35 carries the N6-(2-hydroxyisobutyryl)lysine; alternate modification. Lys35 bears the N6-(beta-hydroxybutyryl)lysine; alternate mark. Lys35 carries the N6-crotonyllysine; alternate modification. Lys35 carries the post-translational modification N6-glutaryllysine; alternate. Lys35 carries the post-translational modification N6-succinyllysine; alternate. Lys35 participates in a covalent cross-link: Glycyl lysine isopeptide (Lys-Gly) (interchain with G-Cter in ubiquitin); alternate. A Phosphoserine; by AMPK modification is found at Ser37. N6-(2-hydroxyisobutyryl)lysine; alternate occurs at positions 44, 47, and 58. Lys44 carries the post-translational modification N6-lactoyllysine; alternate. An N6-glutaryllysine; alternate mark is found at Lys44 and Lys47. Residue Lys47 is modified to N6-methyllysine; alternate. An N6,N6-dimethyllysine; alternate modification is found at Lys58. Residue Arg80 is modified to Dimethylated arginine. Lys86 is subject to N6-(2-hydroxyisobutyryl)lysine; alternate. Position 86 is an N6-(beta-hydroxybutyryl)lysine; alternate (Lys86). At Lys86 the chain carries N6-acetyllysine; alternate. Residue Lys86 is modified to N6-lactoyllysine; alternate. Lys86 carries the N6,N6,N6-trimethyllysine; alternate modification. Arg87 and Arg93 each carry omega-N-methylarginine. The segment at 111-136 (PCPRAPRRSPSTPAPSESLPGPGARS) is disordered.

Belongs to the histone H2B family. As to quaternary structure, the nucleosome is a histone octamer containing two molecules each of H2A, H2B, H3 and H4 assembled in one H3-H4 heterotetramer and two H2A-H2B heterodimers. The octamer wraps approximately 147 bp of DNA. Phosphorylation at Ser-37 (H2BS36ph) by AMPK in response to stress promotes transcription. Phosphorylated on Ser-15 (H2BS14ph) by STK4/MST1 during apoptosis; which facilitates apoptotic chromatin condensation. Also phosphorylated on Ser-15 in response to DNA double strand breaks (DSBs), and in correlation with somatic hypermutation and immunoglobulin class-switch recombination. Post-translationally, crotonylation (Kcr) is specifically present in male germ cells and marks testis-specific genes in post-meiotic cells, including X-linked genes that escape sex chromosome inactivation in haploid cells. Crotonylation marks active promoters and enhancers and confers resistance to transcriptional repressors. It is also associated with post-meiotically activated genes on autosomes. In terms of processing, lactylated in macrophages by EP300/P300 by using lactoyl-CoA directly derived from endogenous or exogenous lactate, leading to stimulates gene transcription.

The protein localises to the nucleus. The protein resides in the chromosome. In terms of biological role, core component of nucleosome. Nucleosomes wrap and compact DNA into chromatin, limiting DNA accessibility to the cellular machineries which require DNA as a template. Histones thereby play a central role in transcription regulation, DNA repair, DNA replication and chromosomal stability. DNA accessibility is regulated via a complex set of post-translational modifications of histones, also called histone code, and nucleosome remodeling. The sequence is that of Putative histone H2B type 2-C from Homo sapiens (Human).